The following is a 331-amino-acid chain: Ribose-phosphate pyrophosphokinase (331 aa).

55-57 lines the ATP pocket; the sequence is DGE. Residues H148 and D187 each contribute to the Mg(2+) site. Residue K211 is part of the active site. Residues R213, D237, and 241–245 each bind D-ribose 5-phosphate; that span reads DTGGT.

Belongs to the ribose-phosphate pyrophosphokinase family. Class I subfamily. Homohexamer. The cofactor is Mg(2+).

It localises to the cytoplasm. The enzyme catalyses D-ribose 5-phosphate + ATP = 5-phospho-alpha-D-ribose 1-diphosphate + AMP + H(+). It functions in the pathway metabolic intermediate biosynthesis; 5-phospho-alpha-D-ribose 1-diphosphate biosynthesis; 5-phospho-alpha-D-ribose 1-diphosphate from D-ribose 5-phosphate (route I): step 1/1. Its function is as follows. Involved in the biosynthesis of the central metabolite phospho-alpha-D-ribosyl-1-pyrophosphate (PRPP) via the transfer of pyrophosphoryl group from ATP to 1-hydroxyl of ribose-5-phosphate (Rib-5-P). The chain is Ribose-phosphate pyrophosphokinase from Parasynechococcus marenigrum (strain WH8102).